The following is a 465-amino-acid chain: Phosphatidate cytidylyltransferase (465 aa).

The tract at residues 1 to 60 (MSDQPPAENADVRQRRAPESPVTERLRAPARDDARPTSDESDMEGILQDEDSDAGSKNKE) is disordered. Positions 10-38 (ADVRQRRAPESPVTERLRAPARDDARPTS) are enriched in basic and acidic residues. Acidic residues predominate over residues 39–53 (DESDMEGILQDEDSD). 8 consecutive transmembrane segments (helical) span residues 95–117 (WVVR…TRGA), 121–143 (MFLV…LAVY), 158–178 (FLLT…WGIV), 187–207 (FLVA…FVSF), 214–234 (GYYM…LLIV), 239–259 (FIIQ…AMII), 288–308 (GFIG…LALY), and 367–387 (IALS…ASGF).

The protein belongs to the CDS family.

The protein localises to the membrane. The catalysed reaction is a 1,2-diacyl-sn-glycero-3-phosphate + CTP + H(+) = a CDP-1,2-diacyl-sn-glycerol + diphosphate. It functions in the pathway phospholipid metabolism; CDP-diacylglycerol biosynthesis; CDP-diacylglycerol from sn-glycerol 3-phosphate: step 3/3. Its function is as follows. Provides CDP-diacylglycerol, an important precursor for the synthesis of phosphatidylinositol (PtdIns). In Caenorhabditis elegans, this protein is Phosphatidate cytidylyltransferase (cdgs-1).